A 645-amino-acid chain; its full sequence is uncharacterized protein (645 aa).

The protein belongs to the mycobacterial PPE family.

This is an uncharacterized protein from Mycobacterium tuberculosis (strain CDC 1551 / Oshkosh).